A 298-amino-acid polypeptide reads, in one-letter code: U1 small nuclear ribonucleoprotein A (298 aa).

RRM domains are found at residues 2–113 (SALY…KART) and 227–298 (KVLL…GFAK).

This sequence belongs to the RRM U1 A/B'' family. Component of the spliceosome where it is associated with snRNP U1.

The protein resides in the nucleus. Its function is as follows. Involved in nuclear mRNA splicing. The principal role of the U1A is to help fold or maintain U1 RNA in an active configuration. It is the first snRNP to interact with pre-mRNA. This interaction is required for the subsequent binding of U2 snRNP and the U4/U6/U5 tri-snRNP. The chain is U1 small nuclear ribonucleoprotein A (MUD1) from Saccharomyces cerevisiae (strain ATCC 204508 / S288c) (Baker's yeast).